The primary structure comprises 38 residues: Cytochrome b6-f complex subunit 5 (38 aa).

The helical transmembrane segment at 5–25 threads the bilayer; sequence LLCGIVLGLIPVTLLGLFVAA.

The protein belongs to the PetG family. The 4 large subunits of the cytochrome b6-f complex are cytochrome b6, subunit IV (17 kDa polypeptide, PetD), cytochrome f and the Rieske protein, while the 4 small subunits are PetG, PetL, PetM and PetN. The complex functions as a dimer.

Its subcellular location is the cellular thylakoid membrane. Functionally, component of the cytochrome b6-f complex, which mediates electron transfer between photosystem II (PSII) and photosystem I (PSI), cyclic electron flow around PSI, and state transitions. PetG is required for either the stability or assembly of the cytochrome b6-f complex. This Parasynechococcus marenigrum (strain WH8102) protein is Cytochrome b6-f complex subunit 5.